A 517-amino-acid polypeptide reads, in one-letter code: Acetylcholine receptor subunit gamma (517 aa).

Residues 1–22 (MHGGQGPLLLLLLLAVCLGAQG) form the signal peptide. Residues 23 to 240 (RNQEERLLAD…VVFYLLIQRK (218 aa)) are Extracellular-facing. N-linked (GlcNAc...) asparagine glycans are attached at residues N52 and N163. C150 and C164 are oxidised to a cystine. 3 helical membrane-spanning segments follow: residues 241 to 265 (PLFY…IHFL), 275 to 293 (TVAI…LVAK), and 309 to 330 (LTFL…LNVS). Topologically, residues 331–474 (LRSPHTHSMA…WFLVGRVLDR (144 aa)) are cytoplasmic. The chain crosses the membrane as a helical span at residues 475–495 (VCFLAMLSLFICGTAGIFLMA).

This sequence belongs to the ligand-gated ion channel (TC 1.A.9) family. Acetylcholine receptor (TC 1.A.9.1) subfamily. Gamma/CHRNG sub-subfamily. Pentamer of two alpha chains, and one each of the beta, delta, and gamma (in immature muscle) or epsilon (in mature muscle) chains.

Its subcellular location is the postsynaptic cell membrane. It is found in the cell membrane. It carries out the reaction K(+)(in) = K(+)(out). The enzyme catalyses Na(+)(in) = Na(+)(out). Functionally, after binding acetylcholine, the AChR responds by an extensive change in conformation that affects all subunits and leads to opening of an ion-conducting channel across the plasma membrane. This is Acetylcholine receptor subunit gamma from Homo sapiens (Human).